The chain runs to 97 residues: CLAVATA3/ESR (CLE)-related protein ESR2-C (97 aa).

Positions 1 to 97 are disordered; it reads TRTDDKPGVN…IGPPPFLDRY (97 aa). Hydroxyproline is present on residues P47 and P50. O-linked (Ara...) hydroxyproline glycosylation occurs at P50.

Belongs to the CLV3/ESR signal peptide family. In terms of processing, the O-glycosylation (arabinosylation) of the hydroxyproline Pro-50 enhances binding affinity of the ESR2Cp peptide for its receptor. In terms of tissue distribution, seed endosperm.

The protein localises to the secreted. Its subcellular location is the extracellular space. In terms of biological role, extracellular signal peptide that regulates cell fate. In Zea mays (Maize), this protein is CLAVATA3/ESR (CLE)-related protein ESR2-C.